Reading from the N-terminus, the 393-residue chain is MNGPATRKDLMIVNMGPHHPSMHGVLRLILTLDGEDVIDCEPILGYLHRGMEKIAENRTIIQYLPYVTRWDYLATMFTEAITVNGPEQLGNIQVPKRASYIRVIMLELSRIASHLLWLGPFMADIGAQTPFFYIFRERELVYDLFEAATGMRMMHNFFRIGGVAADLPHGWIDKCLDFCDYFLTAVAEYQKLITQNPIFLERVEGVGIISGEEVINWGLSGPMLRASGIPWDLRKVDRYECYDEFDWEVQWQKEGDSLARYLVRLAEMTESVKIIQQALEGIPGGPYENLEIRSFDRARSPEWNDFDYRFISKKPSPTFELAKQELYVRVEAPKGELGIFLIGDQGGFPWRWKIRPPGFINLQILPQLVKRMKLADIMTILGSIDIIMGEVDR.

The protein belongs to the complex I 49 kDa subunit family. NDH is composed of at least 16 different subunits, 5 of which are encoded in the nucleus.

It localises to the plastid. It is found in the chloroplast thylakoid membrane. The enzyme catalyses a plastoquinone + NADH + (n+1) H(+)(in) = a plastoquinol + NAD(+) + n H(+)(out). It catalyses the reaction a plastoquinone + NADPH + (n+1) H(+)(in) = a plastoquinol + NADP(+) + n H(+)(out). Functionally, NDH shuttles electrons from NAD(P)H:plastoquinone, via FMN and iron-sulfur (Fe-S) centers, to quinones in the photosynthetic chain and possibly in a chloroplast respiratory chain. The immediate electron acceptor for the enzyme in this species is believed to be plastoquinone. Couples the redox reaction to proton translocation, and thus conserves the redox energy in a proton gradient. The protein is NAD(P)H-quinone oxidoreductase subunit H, chloroplastic of Cucumis sativus (Cucumber).